The following is a 342-amino-acid chain: uncharacterized protein (342 aa).

The Nudix hydrolase domain occupies Thr155 to Asp309.

This is an uncharacterized protein from Saccharomyces cerevisiae (strain ATCC 204508 / S288c) (Baker's yeast).